Consider the following 166-residue polypeptide: MELMIGRVVKSHGIRGEVAIEVTTEEPEIRFAQGEVLNGRQGGKEHSLTIASVRPHQNRLLVKFKEIADRTAADSLRGTRFFAAPLDDDVDDGFYDHELEGLAVIHGEEKIGEVSGVIHGPAQSLLEVTLESGKEVLIPFVHDIVPEVDLDAGTCVITPPEGLLEL.

In terms of domain architecture, PRC barrel spans 91 to 163; the sequence is DDGFYDHELE…TCVITPPEGL (73 aa).

It belongs to the RimM family. As to quaternary structure, binds ribosomal protein uS19.

The protein resides in the cytoplasm. Its function is as follows. An accessory protein needed during the final step in the assembly of 30S ribosomal subunit, possibly for assembly of the head region. Essential for efficient processing of 16S rRNA. May be needed both before and after RbfA during the maturation of 16S rRNA. It has affinity for free ribosomal 30S subunits but not for 70S ribosomes. In Corynebacterium diphtheriae (strain ATCC 700971 / NCTC 13129 / Biotype gravis), this protein is Ribosome maturation factor RimM.